The sequence spans 449 residues: Glycine--tRNA ligase (449 aa).

Substrate is bound by residues R100 and E158. ATP contacts are provided by residues R190–E192, F200–F205, E275–L276, and G319–R322. F205–E209 is a substrate binding site. Position 315–319 (E315–G319) interacts with substrate.

The protein belongs to the class-II aminoacyl-tRNA synthetase family. As to quaternary structure, homodimer.

The protein localises to the cytoplasm. It carries out the reaction tRNA(Gly) + glycine + ATP = glycyl-tRNA(Gly) + AMP + diphosphate. In terms of biological role, catalyzes the attachment of glycine to tRNA(Gly). The sequence is that of Glycine--tRNA ligase from Mycoplasma pneumoniae (strain ATCC 29342 / M129 / Subtype 1) (Mycoplasmoides pneumoniae).